Consider the following 245-residue polypeptide: 1-(5-phosphoribosyl)-5-[(5-phosphoribosylamino)methylideneamino] imidazole-4-carboxamide isomerase (245 aa).

Catalysis depends on aspartate 7, which acts as the Proton acceptor. Aspartate 129 (proton donor) is an active-site residue.

The protein belongs to the HisA/HisF family.

It is found in the cytoplasm. The enzyme catalyses 1-(5-phospho-beta-D-ribosyl)-5-[(5-phospho-beta-D-ribosylamino)methylideneamino]imidazole-4-carboxamide = 5-[(5-phospho-1-deoxy-D-ribulos-1-ylimino)methylamino]-1-(5-phospho-beta-D-ribosyl)imidazole-4-carboxamide. The protein operates within amino-acid biosynthesis; L-histidine biosynthesis; L-histidine from 5-phospho-alpha-D-ribose 1-diphosphate: step 4/9. This chain is 1-(5-phosphoribosyl)-5-[(5-phosphoribosylamino)methylideneamino] imidazole-4-carboxamide isomerase, found in Yersinia pestis bv. Antiqua (strain Antiqua).